A 228-amino-acid chain; its full sequence is Extracellular protease inhibitor 10 (228 aa).

A signal peptide spans 1–22; the sequence is MKSAFTLSLALVAVTATISAAA. 3 Kazal-like domains span residues 23-72, 90-127, and 156-208; these read DDNC…ECAS, TSGTVGCPDMCLDVYDPVSDENGKEYSNQCYMEMAKCK, and GYQG…EGTL. Asparagine 25 carries N-linked (GlcNAc...) asparagine glycosylation. Disulfide bonds link cysteine 26–cysteine 56, cysteine 30–cysteine 49, and cysteine 38–cysteine 70. Positions 69–92 are disordered; it reads ECASTPASSATPSPVTSSTGSTSG. The segment covering 71–92 has biased composition (low complexity); that stretch reads ASTPASSATPSPVTSSTGSTSG. 4 disulfide bridges follow: cysteine 96–cysteine 126, cysteine 100–cysteine 119, cysteine 162–cysteine 193, and cysteine 167–cysteine 186. The N-linked (GlcNAc...) asparagine glycan is linked to asparagine 199.

As to quaternary structure, interacts with host subtilisin-like protease P69B.

It is found in the secreted. Its function is as follows. Secreted effector that interacts with and inhibits the pathogenesis-related P69B subtilisin-like serine protease of host tomato. Inhibition of host proteases by a pathogen extracellular protease inhibitor forms a specific type of defense-counterdefense mechanism between plants and microbial pathogens. The protein is Extracellular protease inhibitor 10 of Phytophthora infestans (strain T30-4) (Potato late blight agent).